A 975-amino-acid chain; its full sequence is Probable outer membrane protein PmpA (975 aa).

Residues 1–51 form the signal peptide; the sequence is MNRVIEIHAHYDQRQLSQSPNTNFLVHHPYLTLIPKFLLGALIVYAPYSFA. Residues 699-975 enclose the Autotransporter domain; it reads RSLIPTSYFG…SLSCGGYVGF (277 aa).

Belongs to the PMP outer membrane protein family.

It localises to the secreted. The protein localises to the cell wall. Its subcellular location is the cell outer membrane. This chain is Probable outer membrane protein PmpA (pmpA), found in Chlamydia trachomatis serovar D (strain ATCC VR-885 / DSM 19411 / UW-3/Cx).